The sequence spans 908 residues: 26S proteasome non-ATPase regulatory subunit 2 (908 aa).

The residue at position 1 (M1) is an N-acetylmethionine. The disordered stretch occupies residues 1–51 (MEEGGRDKTPVQSQQPSATTPSGADEKSSGKERRDAGEKDKEQELSEEDKQ). T9 and T20 each carry phosphothreonine. Residues 10–22 (PVQSQQPSATTPS) show a composition bias toward polar residues. Positions 24 to 51 (ADEKSSGKERRDAGEKDKEQELSEEDKQ) are enriched in basic and acidic residues. S29 and S147 each carry phosphoserine. The residue at position 194 (Y194) is a Phosphotyrosine. Phosphoserine is present on residues S361 and S363. PC repeat units follow at residues 409-442 (SAAA…YIKS), 443-479 (GALL…TMRL), 480-514 (GSIF…SMEV), 517-551 (VTAL…TELK), and 560-589 (LGLG…PFRS). K551 carries the N6-acetyllysine modification. A compositionally biased stretch (basic and acidic residues) spans 623–643 (KEKEEDKDKKEKKDKDKKEAP). The tract at residues 623 to 645 (KEKEEDKDKKEKKDKDKKEAPAD) is disordered. PC repeat units follow at residues 692-723 (LALA…EVSY) and 742-757 (AAML…KDPN). The segment at 708–903 (DTLSKFSHDA…LEGFVILRKN (196 aa)) is required for interaction with UBLCP1.

Belongs to the proteasome subunit S2 family. As to quaternary structure, component of the 19S proteasome regulatory particle complex. The 26S proteasome consists of a 20S core particle (CP) and two 19S regulatory subunits (RP). The regulatory particle is made of a lid composed of 9 subunits, a base containing 6 ATPases and few additional components including PSMD2. Interacts with RPGRIP1L. Interacts with CRY1 in a KDM8-dependent manner. Interacts (via C-terminus) with phosphatase UBLCP1 (via ubiquitin-like domain); the interaction recruits UBLCP1 to the 19S regulatory particle where it dephosphorylates 19S subunit PSMC2/RPT1 which impairs PSMC2 ATPase activity and disrupts 26S proteasome assembly.

Functionally, component of the 26S proteasome, a multiprotein complex involved in the ATP-dependent degradation of ubiquitinated proteins. This complex plays a key role in the maintenance of protein homeostasis by removing misfolded or damaged proteins, which could impair cellular functions, and by removing proteins whose functions are no longer required. Therefore, the proteasome participates in numerous cellular processes, including cell cycle progression, apoptosis, or DNA damage repair. Its function is as follows. Binds to the intracellular domain of tumor necrosis factor type 1 receptor. The binding domain of TRAP1 and TRAP2 resides outside the death domain of TNFR1. In Mus musculus (Mouse), this protein is 26S proteasome non-ATPase regulatory subunit 2 (Psmd2).